The following is a 388-amino-acid chain: 3beta-hydroxysteroid dehydrogenase dhs-16 (388 aa).

Residues 2 to 22 (LELIYILPLLCFVYFLFRRFV) traverse the membrane as a helical segment. The active-site Proton acceptor is Tyr188. 2 helical membrane passes run 300–320 (AIFMFIPLSIFPTALQDWILA) and 346–366 (IQWIQFLSQIAIIPLLYTIFF).

This sequence belongs to the short-chain dehydrogenases/reductases (SDR) family. Strongly expressed in the hypodermis and posterior pharyngeal bulb and in a number of unidentified neurons of the head and tail.

The protein localises to the membrane. The catalysed reaction is lathosterol + NAD(+) = 5alpha-cholest-7-en-3-one + NADH + H(+). The protein operates within steroid hormone biosynthesis; dafachronic acid biosynthesis. In terms of biological role, 3beta-hydroxysteroid dehydrogenase that converts 3beta-hydroxysteroids to 3-ketosteroids, an essential step in the production of dafachronic acids from cholesterol. Catalyzes the dehydrogenation of lathosterol (5alpha-cholest-7-en-3beta-ol) to lathosterone (5alpha-cholest-7-en-3-one), a step required for maximal biosynthesis of Delta(7)-dafachronic acid. Dafachronic acids act as ligands and bind directly to the nuclear hormone receptor (NHR) daf-12, suppressing dauer formation and inducing reproductive growth, they can also regulate C.elegans lifespan. This is 3beta-hydroxysteroid dehydrogenase dhs-16 (dhs-16) from Caenorhabditis elegans.